Consider the following 524-residue polypeptide: Chitinase D (524 aa).

An N-terminal signal peptide occupies residues 1 to 30 (MNQAVRFRPVITFALAFILIITWFAPRADA). The 86-residue stretch at 95–180 (VPAGLTSSLV…TSLSVTTSTG (86 aa)) folds into the Fibronectin type-III domain. Positions 190 to 514 (KWLIGYWHNF…NAHRPFLNGL (325 aa)) constitute a GH18 domain. Catalysis depends on Glu-303, which acts as the Proton donor.

This sequence belongs to the glycosyl hydrolase 18 family. Chitinase class II subfamily.

The enzyme catalyses Random endo-hydrolysis of N-acetyl-beta-D-glucosaminide (1-&gt;4)-beta-linkages in chitin and chitodextrins.. This chain is Chitinase D (chiD), found in Niallia circulans (Bacillus circulans).